A 537-amino-acid chain; its full sequence is MSGQAASYYNPSQSYGDFQPGMQNPQQQPDYYNNNVSNHGYDLNFQRGPEPKPPTEPPPTYNQAVYGFDDAFKIERPKYHDIWAGLLFIAVFLGYVAVSGVAIHRYAKYKGLNGDGIYDSSNSFSLDTNTLILFIFVLCVALAFSYAYFLGARYFSKLFIWVTGILNIVFALATGIYYIARKQYGGGIVFLLFGVFAIICFISWIPRIPFSAFMLQTSIDVSRKYGHMFIVSTIGGLVAVAFAAWFSVTLVSIYVAYEPSSSGSNPSCSDGGCSRARVIGLVVYVTFAMYWFSEWLKNTIHTTIAGVYGSWYFWSQSPNGMPRGSTRGAFRRATTYSFGSVSFGSLIIAIINMLRQACSVAQRNEAAEGSIVGSIMFWILGCFIAILDWLVTLFNRYAFCHIALYGKAYIPAAKDTWTMMRDRGIDALVNDCLIGPVLTMGSVFVSYVCALLAYLYLQFTKPSYNADGNFTAVIMAFAFVIGLQICQIFMTPVSSGIETIFVAMGWDPQVMIRDHPDLYYRMIQVYPRVQQAIQPSA.

Residues 1-16 (MSGQAASYYNPSQSYG) show a composition bias toward polar residues. A disordered region spans residues 1 to 35 (MSGQAASYYNPSQSYGDFQPGMQNPQQQPDYYNNN). The Cytoplasmic segment spans residues 1–81 (MSGQAASYYN…FKIERPKYHD (81 aa)). Over residues 23–35 (QNPQQQPDYYNNN) the composition is skewed to low complexity. The chain crosses the membrane as a helical span at residues 82–102 (IWAGLLFIAVFLGYVAVSGVA). Residues 103–130 (IHRYAKYKGLNGDGIYDSSNSFSLDTNT) are Extracellular-facing. Residues 131 to 151 (LILFIFVLCVALAFSYAYFLG) form a helical membrane-spanning segment. Over 152–158 (ARYFSKL) the chain is Cytoplasmic. The helical transmembrane segment at 159-179 (FIWVTGILNIVFALATGIYYI) threads the bilayer. The Extracellular segment spans residues 180–184 (ARKQY). The chain crosses the membrane as a helical span at residues 185 to 205 (GGGIVFLLFGVFAIICFISWI). Residues 206–227 (PRIPFSAFMLQTSIDVSRKYGH) are Cytoplasmic-facing. The helical transmembrane segment at 228 to 248 (MFIVSTIGGLVAVAFAAWFSV) threads the bilayer. Residues 249–275 (TLVSIYVAYEPSSSGSNPSCSDGGCSR) are Extracellular-facing. The chain crosses the membrane as a helical span at residues 276-296 (ARVIGLVVYVTFAMYWFSEWL). At 297-333 (KNTIHTTIAGVYGSWYFWSQSPNGMPRGSTRGAFRRA) the chain is on the cytoplasmic side. A helical transmembrane segment spans residues 334–354 (TTYSFGSVSFGSLIIAIINML). Topologically, residues 355 to 370 (RQACSVAQRNEAAEGS) are extracellular. Residues 371-391 (IVGSIMFWILGCFIAILDWLV) traverse the membrane as a helical segment. Topologically, residues 392-432 (TLFNRYAFCHIALYGKAYIPAAKDTWTMMRDRGIDALVNDC) are cytoplasmic. A helical transmembrane segment spans residues 433–453 (LIGPVLTMGSVFVSYVCALLA). Over 454–469 (YLYLQFTKPSYNADGN) the chain is Extracellular. N-linked (GlcNAc...) asparagine glycosylation is present at Asn-469. A helical membrane pass occupies residues 470–490 (FTAVIMAFAFVIGLQICQIFM). Residues 491 to 537 (TPVSSGIETIFVAMGWDPQVMIRDHPDLYYRMIQVYPRVQQAIQPSA) are Cytoplasmic-facing.

Belongs to the CTL (choline transporter-like) family.

The protein localises to the cell membrane. Functionally, probably involved in transport through the plasma membrane. In Aspergillus fumigatus (strain ATCC MYA-4609 / CBS 101355 / FGSC A1100 / Af293) (Neosartorya fumigata), this protein is Protein pns1 (pns1).